A 495-amino-acid chain; its full sequence is Transcription termination/antitermination protein NusA (495 aa).

Residues 135–200 enclose the S1 motif domain; that stretch reads GKIVTGTVKK…KTAQLFVTRS (66 aa). In terms of domain architecture, KH spans 302 to 374; it reads NHSMDIAVEA…LDEEFAQILV (73 aa).

It belongs to the NusA family. Monomer. Binds directly to the core enzyme of the DNA-dependent RNA polymerase and to nascent RNA.

The protein localises to the cytoplasm. In terms of biological role, participates in both transcription termination and antitermination. The sequence is that of Transcription termination/antitermination protein NusA from Haemophilus influenzae (strain ATCC 51907 / DSM 11121 / KW20 / Rd).